The sequence spans 340 residues: Putative UPF0607 protein ENSP00000332738 (340 aa).

A compositionally biased stretch (basic and acidic residues) spans 75 to 90 (VRAEEPKEATEVKDQV). Disordered regions lie at residues 75-130 (VRAE…NPRP) and 215-281 (GLLM…KLPC). Polar residues predominate over residues 91 to 126 (ETQGQEDNKTGPCSNGKAASTSRPLETQGNLTSSWY). The span at 228 to 241 (PAALRSSRSSPPRA) shows a compositional bias: low complexity. Over residues 242–251 (AGHRPRKRKL) the composition is skewed to basic residues. Residues 254 to 266 (PPLQLQQTPPLQL) show a composition bias toward low complexity.

It belongs to the UPF0607 family.

This is Putative UPF0607 protein ENSP00000332738 from Homo sapiens (Human).